The following is a 430-amino-acid chain: UPF0597 protein DSY1109 (430 aa).

Belongs to the UPF0597 family.

In Desulfitobacterium hafniense (strain Y51), this protein is UPF0597 protein DSY1109.